A 351-amino-acid chain; its full sequence is Large ribosomal subunit protein uL3 (351 aa).

Disordered regions lie at residues 1–31 (MGHR…TPRT) and 246–271 (KGSR…GQLG).

The protein belongs to the universal ribosomal protein uL3 family. Part of the 50S ribosomal subunit. Forms a cluster with proteins L14 and L24e.

Functionally, one of the primary rRNA binding proteins, it binds directly near the 3'-end of the 23S rRNA, where it nucleates assembly of the 50S subunit. This is Large ribosomal subunit protein uL3 from Saccharolobus islandicus (strain M.14.25 / Kamchatka #1) (Sulfolobus islandicus).